We begin with the raw amino-acid sequence, 159 residues long: MFLRQEDFATVVRSTPLVSLDFIVENSRGEFLLGKRTNRPAQGYWFVPGGRVQKDETLEAAFERLTMAELGLRLPITAGQFYGVWQHFYDDNFSGTDFTTHYVVLGFRFRVSEEELLLPDEQHDDYRWLTSDALLASDNVHANSRAYFLAEKRTGVPGL.

Residues 2 to 3, Phe8, and Arg36 contribute to the substrate site; that span reads FL. Residues 13–153 form the Nudix hydrolase domain; the sequence is RSTPLVSLDF…SRAYFLAEKR (141 aa). Residues Gly49, Glu69, and Gln122 each contribute to the Mg(2+) site. The Nudix box motif lies at 50–71; the sequence is GRVQKDETLEAAFERLTMAELG.

Homodimer. Mg(2+) is required as a cofactor.

The enzyme catalyses GDP-alpha-D-mannose + H2O = D-mannose + GDP + H(+). Hydrolyzes both GDP-mannose and GDP-glucose. Could participate in the regulation of cell wall biosynthesis by influencing the concentration of GDP-mannose or GDP-glucose in the cell. Might also be involved in the biosynthesis of the slime polysaccharide colanic acid. In Escherichia coli (strain K12), this protein is GDP-mannose mannosyl hydrolase.